The sequence spans 142 residues: Large ribosomal subunit protein uL11 (142 aa).

The protein belongs to the universal ribosomal protein uL11 family. As to quaternary structure, part of the ribosomal stalk of the 50S ribosomal subunit. Interacts with L10 and the large rRNA to form the base of the stalk. L10 forms an elongated spine to which L12 dimers bind in a sequential fashion forming a multimeric L10(L12)X complex. Post-translationally, one or more lysine residues are methylated.

In terms of biological role, forms part of the ribosomal stalk which helps the ribosome interact with GTP-bound translation factors. The sequence is that of Large ribosomal subunit protein uL11 from Mannheimia succiniciproducens (strain KCTC 0769BP / MBEL55E).